Here is a 74-residue protein sequence, read N- to C-terminus: Putative membrane protein insertion efficiency factor (74 aa).

This sequence belongs to the UPF0161 family.

It is found in the cell inner membrane. Its function is as follows. Could be involved in insertion of integral membrane proteins into the membrane. This is Putative membrane protein insertion efficiency factor from Blochmanniella floridana.